We begin with the raw amino-acid sequence, 770 residues long: Signal transducer and activator of transcription 3 (770 aa).

An N-acetylalanine modification is found at A2. An N6-acetyllysine mark is found at K49 and K87. An Essential for nuclear import motif is present at residues D150–M162. An SH2 domain is found at W580–L670. An allysine; alternate mark is found at K601, K615, and K631. N6-acetyllysine; alternate occurs at positions 601, 615, and 631. At Y640 the chain carries Phosphotyrosine; by TYK2. Allysine; alternate is present on K685. An N6-acetyllysine; alternate modification is found at K685. P704 is modified (phosphotyrosine). Y705 is modified (phosphotyrosine; by FER and PTK6). An N6-acetyllysine modification is found at K707. T714 is subject to Phosphothreonine. S727 is subject to Phosphoserine; by DYRK2, NLK, NEK6, IRAK1, RPS6KA5, ZIPK/DAPK3 and PKC/PRKCE.

This sequence belongs to the transcription factor STAT family. Forms a homodimer or a heterodimer with a related family member (at least STAT1). Component of a promoter-binding complex composed of STAT3, NFATC3 and NFATC4; complex formation is enhanced by calcineurin. Interacts with IL31RA, NCOA1, PELP1, SIPAR, SOCS7, STATIP1 and TMF1. Interacts with IL23R in presence of IL23. Interacts (via SH2 domain) with NLK. Interacts with ARL2BP; the interaction is enhanced by LIF and JAK1 expression. Interacts with KPNA4 and KPNA5; KPNA4 may be the primary mediator of nuclear import. Interacts with CAV2; the interaction is increased on insulin-induced tyrosine phosphorylation of CAV2 and leads to STAT3 activation. Interacts with ARL2BP; interaction is enhanced with ARL2. Interacts with NEK6. Binds to CDK9 when activated and nuclear. Interacts with BMX. Interacts with ZIPK/DAPK3. Interacts with PIAS3; the interaction occurs on stimulation by IL6, CNTF or OSM and inhibits the DNA binding activity of STAT3. In prostate cancer cells, interacts with PRKCE and promotes DNA binding activity of STAT3. Interacts with STMN3, antagonizing its microtubule-destabilizing activity. Interacts with the 'Lys-129' acetylated form of BIRC5/survivin. Interacts with FER. Interacts (via SH2 domain) with EIF2AK2/PKR (via the kinase catalytic domain). Interacts with INPP5F; the interaction is independent of STAT3 Tyr-705 phosphorylation status. Interacts with FGFR4. Interacts with OCIAD1. Interacts with OCIAD2. Interacts (unphosphorylated or phosphorylated at Ser-727) with PHB1. Interacts and may form heterodimers with NHLH1. Found in a complex with SLC39A6, SLC39A10 and with the 'Ser-727' phosphorylated form of STAT3 throughout mitosis. Interacts (when phosphorylated at Tyr-705) with CD274/PD-L1; promoting nuclear translocation of CD274/PD-L1. Interacts (when acetylated) with EP300 (via bromo domain); interaction takes place following STAT3 acetylation by EP300 and promotes enhanceosome assembly. Interacts (when acetylated) with BRD2 (via bromo domain); interaction promotes STAT3 recruitment to chromatin and T-helper Th17 cell differentiation. Interacts with FAM220A/SIPAR; the interaction occurs in both the nucleus and the cytoplasm, is enhanced by IL6 and promotes STAT3 dephosphorylation. Interacts in both unphosphorylated and phosphorylated forms with FAM220A but interacts preferentially in the phosphorylated form in the nucleus. Interacts with PTPN2; the interaction is promoted by FAM220A and leads to STAT3 dephosphorylation which negatively regulates STAT3 transcriptional activator activity. In terms of assembly, (Microbial infection) Interacts with HCV core protein. As to quaternary structure, (Microbial infection) Interacts with S.typhimurium SarA. (Microbial infection) Interacts with human cytomegalovirus (HHV-5) immediate early protein IE1; this interaction leads to STAT3 nuclear accumulation and disruption of IL6-induced STAT3 phosphorylation. In terms of processing, tyrosine phosphorylated upon stimulation with EGF. Tyrosine phosphorylated in response to constitutively activated FGFR1, FGFR2, FGFR3 and FGFR4. Activated through tyrosine phosphorylation by BMX. Tyrosine phosphorylated in response to IL6, IL11, LIF, CNTF, KITLG/SCF, CSF1, EGF, PDGF, IFN-alpha, LEP and OSM. Activated KIT promotes phosphorylation on tyrosine residues and subsequent translocation to the nucleus. Phosphorylated on serine upon DNA damage, probably by ATM or ATR. Serine phosphorylation is important for the formation of stable DNA-binding STAT3 homodimers and maximal transcriptional activity. ARL2BP may participate in keeping the phosphorylated state of STAT3 within the nucleus. Upon LPS challenge, phosphorylated within the nucleus by IRAK1. Upon erythropoietin treatment, phosphorylated on Ser-727 by RPS6KA5. Dephosphorylation on tyrosine residues by PTPN2 negatively regulates IL6/interleukin-6 signaling. Phosphorylation at Tyr-705 by PTK6, isoform M2 of PKM (PKM2) or FER leads to an increase of its transcriptional activity. Phosphorylation at Tyr-705 is increased in the presence of calcineurin. Phosphorylation at Tyr-640 by TYK2 negatively regulates transcriptional activity. Post-translationally, acetylated on lysine residues by EP300/p300, promoting its activation. Acetylation at Lys-49 and Lys-87 by EP300/p300 promotes its activation. Acetylation at Lys-87 by EP300/p300 promotes its association with BRD2 and recruitment to chromatin. Deacetylated at Lys-49 and Lys-87 by HDAC1. Acetylation at Lys-685 by EP300/p300 promotes its homodimerization and activation. Deacetylated at Lys-685 by HDAC3. Acetylated on lysine residues by CREBBP. Deacetylation by LOXL3 leads to disrupt STAT3 dimerization and inhibit STAT3 transcription activity. Oxidation of lysine residues to allysine on STAT3 preferentially takes place on lysine residues that are acetylated. Some lysine residues are oxidized to allysine by LOXL3, leading to disrupt STAT3 dimerization and inhibit STAT3 transcription activity. Oxidation of lysine residues to allysine on STAT3 preferentially takes place on lysine residues that are acetylated. In terms of processing, (Microbial infection) Phosphorylated on Tyr-705 in the presence of S.typhimurium SarA. As to expression, heart, brain, placenta, lung, liver, skeletal muscle, kidney and pancreas. Expressed in naive CD4(+) T cells as well as T-helper Th17, Th1 and Th2 cells.

The protein localises to the cytoplasm. Its subcellular location is the nucleus. Its function is as follows. Signal transducer and transcription activator that mediates cellular responses to interleukins, KITLG/SCF, LEP and other growth factors. Once activated, recruits coactivators, such as NCOA1 or MED1, to the promoter region of the target gene. May mediate cellular responses to activated FGFR1, FGFR2, FGFR3 and FGFR4. Upon activation of IL6ST/gp130 signaling by interleukin-6 (IL6), binds to the IL6-responsive elements identified in the promoters of various acute-phase protein genes. Activated by IL31 through IL31RA. Acts as a regulator of inflammatory response by regulating differentiation of naive CD4(+) T-cells into T-helper Th17 or regulatory T-cells (Treg): acetylation promotes its transcription activity and cell differentiation while deacetylation and oxidation of lysine residues by LOXL3 inhibits differentiation. Involved in cell cycle regulation by inducing the expression of key genes for the progression from G1 to S phase, such as CCND1. Mediates the effects of LEP on melanocortin production, body energy homeostasis and lactation. May play an apoptotic role by transctivating BIRC5 expression under LEP activation. Cytoplasmic STAT3 represses macroautophagy by inhibiting EIF2AK2/PKR activity. Plays a crucial role in basal beta cell functions, such as regulation of insulin secretion. Following JAK/STAT signaling activation and as part of a complex with NFATC3 and NFATC4, binds to the alpha-beta E4 promoter region of CRYAB and activates transcription in cardiomyocytes. The polypeptide is Signal transducer and activator of transcription 3 (Homo sapiens (Human)).